The following is a 58-amino-acid chain: Birtoxin (58 aa).

An LCN-type CS-alpha/beta domain is found at 3 to 58 (VPGNYPLDKDGNTYKCFLLGGNEECLNVCKLHGVQYGYCYASKCWCEYLEDDKDSV). Intrachain disulfides connect C18/C41, C27/C46, and C31/C48.

As to expression, expressed by the venom gland.

It is found in the secreted. Beta toxins bind voltage-independently at site-4 of sodium channels (Nav) and shift the voltage of activation toward more negative potentials thereby affecting sodium channel activation and promoting spontaneous and repetitive firing. Moderately toxic, but very high abundant. Does not target reptilian channels. Does not produce effect when administered to blowfly and cabbage looper larvae. In mice, produces convulsions, tremors, increased ventilation and, subsequently, death. The protein is Birtoxin of Parabuthus transvaalicus (Transvaal thick-tailed scorpion).